The chain runs to 129 residues: Lysozyme C (129 aa).

One can recognise a C-type lysozyme domain in the interval Lys1–Leu129. Intrachain disulfides connect Cys6–Cys127, Cys30–Cys115, Cys64–Cys80, and Cys76–Cys94. Catalysis depends on residues Glu35 and Asp52.

Belongs to the glycosyl hydrolase 22 family. In terms of assembly, monomer.

It localises to the secreted. It catalyses the reaction Hydrolysis of (1-&gt;4)-beta-linkages between N-acetylmuramic acid and N-acetyl-D-glucosamine residues in a peptidoglycan and between N-acetyl-D-glucosamine residues in chitodextrins.. In terms of biological role, lysozymes have primarily a bacteriolytic function; those in tissues and body fluids are associated with the monocyte-macrophage system and enhance the activity of immunoagents. The polypeptide is Lysozyme C (LYZ) (Chrysolophus amherstiae (Lady Amherst's pheasant)).